The chain runs to 136 residues: Ribosome-binding factor A (136 aa).

It belongs to the RbfA family. In terms of assembly, monomer. Binds 30S ribosomal subunits, but not 50S ribosomal subunits or 70S ribosomes.

It is found in the cytoplasm. Functionally, one of several proteins that assist in the late maturation steps of the functional core of the 30S ribosomal subunit. Associates with free 30S ribosomal subunits (but not with 30S subunits that are part of 70S ribosomes or polysomes). Required for efficient processing of 16S rRNA. May interact with the 5'-terminal helix region of 16S rRNA. The polypeptide is Ribosome-binding factor A (Yersinia pestis bv. Antiqua (strain Antiqua)).